Here is a 609-residue protein sequence, read N- to C-terminus: DNA mismatch repair protein MutL (609 aa).

Positions 364–386 (SVNSKPTDYRPAMSPSFKSTPNT) are disordered.

The protein belongs to the DNA mismatch repair MutL/HexB family.

Its function is as follows. This protein is involved in the repair of mismatches in DNA. It is required for dam-dependent methyl-directed DNA mismatch repair. May act as a 'molecular matchmaker', a protein that promotes the formation of a stable complex between two or more DNA-binding proteins in an ATP-dependent manner without itself being part of a final effector complex. This chain is DNA mismatch repair protein MutL, found in Rickettsia akari (strain Hartford).